A 509-amino-acid chain; its full sequence is Phosphoenolpyruvate carboxylase (509 aa).

The protein belongs to the PEPCase type 2 family. Homotetramer. Mg(2+) serves as cofactor.

It catalyses the reaction oxaloacetate + phosphate = phosphoenolpyruvate + hydrogencarbonate. In terms of biological role, catalyzes the irreversible beta-carboxylation of phosphoenolpyruvate (PEP) to form oxaloacetate (OAA), a four-carbon dicarboxylic acid source for the tricarboxylic acid cycle. The protein is Phosphoenolpyruvate carboxylase of Metallosphaera sedula (strain ATCC 51363 / DSM 5348 / JCM 9185 / NBRC 15509 / TH2).